The sequence spans 553 residues: Arginine--tRNA ligase (553 aa).

The 'HIGH' region motif lies at 130–140 (ANPTGPIHLGG).

This sequence belongs to the class-I aminoacyl-tRNA synthetase family. Monomer.

Its subcellular location is the cytoplasm. The enzyme catalyses tRNA(Arg) + L-arginine + ATP = L-arginyl-tRNA(Arg) + AMP + diphosphate. This Corynebacterium aurimucosum (strain ATCC 700975 / DSM 44827 / CIP 107346 / CN-1) (Corynebacterium nigricans) protein is Arginine--tRNA ligase.